The chain runs to 210 residues: Probable GTP-binding protein EngB (210 aa).

In terms of domain architecture, EngB-type G spans 30–204 (QGYEVAFAGR…YRVLADWMEL (175 aa)). GTP-binding positions include 38-45 (GRSNAGKS), 64-68 (GRTQL), 82-85 (DLPG), 149-152 (TKAD), and 182-185 (LFSA). Residues S45 and T66 each contribute to the Mg(2+) site.

It belongs to the TRAFAC class TrmE-Era-EngA-EngB-Septin-like GTPase superfamily. EngB GTPase family. Mg(2+) is required as a cofactor.

Functionally, necessary for normal cell division and for the maintenance of normal septation. The protein is Probable GTP-binding protein EngB of Pseudomonas putida (strain ATCC 700007 / DSM 6899 / JCM 31910 / BCRC 17059 / LMG 24140 / F1).